Consider the following 297-residue polypeptide: MRVFSSIDELRHTLDALKRQGRNVGLVPTMGYLHAGHMELVARARAENDIVVVSIFVNPLQFGPAEDLSKYPRDLERDAAMLKQAGVNFLFAPGVGDMYPRPMKTVVDIPDLGRELEGAVRPGHFAGVATVVSKLFNIVQPQTAYFGEKDYQQVVIIKRMVEDLAVPVRVISVPTVRDADGLALSSRNVYLSLEERRAAVIVPQTLDEAERLIGDGLTDAKTLEAKLTEFLGREPLARPEVVAVRDATTLEPVTSIGGSVVVALFVRVGSTRLLDNRVIGDNRTIGGRNQPGKGVTK.

30–37 serves as a coordination point for ATP; it reads MGYLHAGH. The active-site Proton donor is the His37. Gln61 lines the (R)-pantoate pocket. Gln61 provides a ligand contact to beta-alanine. Residue 147 to 150 coordinates ATP; sequence GEKD. Gln153 is a (R)-pantoate binding site. Residues Val176 and 184–187 each bind ATP; that span reads LSSR.

The protein belongs to the pantothenate synthetase family. As to quaternary structure, homodimer.

It is found in the cytoplasm. It carries out the reaction (R)-pantoate + beta-alanine + ATP = (R)-pantothenate + AMP + diphosphate + H(+). It participates in cofactor biosynthesis; (R)-pantothenate biosynthesis; (R)-pantothenate from (R)-pantoate and beta-alanine: step 1/1. Its function is as follows. Catalyzes the condensation of pantoate with beta-alanine in an ATP-dependent reaction via a pantoyl-adenylate intermediate. In Rhizobium etli (strain ATCC 51251 / DSM 11541 / JCM 21823 / NBRC 15573 / CFN 42), this protein is Pantothenate synthetase.